A 101-amino-acid chain; its full sequence is uncharacterized protein (101 aa).

The first 17 residues, 1-17 (MKKAAVLAVVLSLGLAG), serve as a signal peptide directing secretion. Cys18 carries N-palmitoyl cysteine lipidation. Cys18 is lipidated: S-diacylglycerol cysteine.

It localises to the cell membrane. This is an uncharacterized protein from Pasteurella multocida (strain Pm70).